We begin with the raw amino-acid sequence, 133 residues long: Ribosome-binding factor A (133 aa).

It belongs to the RbfA family. As to quaternary structure, monomer. Binds 30S ribosomal subunits, but not 50S ribosomal subunits or 70S ribosomes.

The protein resides in the cytoplasm. One of several proteins that assist in the late maturation steps of the functional core of the 30S ribosomal subunit. Associates with free 30S ribosomal subunits (but not with 30S subunits that are part of 70S ribosomes or polysomes). Required for efficient processing of 16S rRNA. May interact with the 5'-terminal helix region of 16S rRNA. This is Ribosome-binding factor A from Citrobacter koseri (strain ATCC BAA-895 / CDC 4225-83 / SGSC4696).